Consider the following 28-residue polypeptide: Ranatuerin-2BYb (28 aa).

Cys-23 and Cys-28 are oxidised to a cystine.

As to expression, expressed by the skin glands.

The protein localises to the secreted. In terms of biological role, antibacterial activity against Gram-negative bacterium E.coli. Very weak hemolysis activity. The sequence is that of Ranatuerin-2BYb from Rana boylii (Foothill yellow-legged frog).